Consider the following 291-residue polypeptide: Probable xyloglucan endotransglucosylase/hydrolase protein 16 (291 aa).

Residues 1–24 (MGRILNRTVLMTLLVVTMAGTAFS) form the signal peptide. The 191-residue stretch at 25 to 215 (GSFNEEFDLT…WSKAPFTAYY (191 aa)) folds into the GH16 domain. Residue Glu-101 is the Nucleophile of the active site. The active-site Proton donor is the Glu-105. Glu-105 contacts xyloglucan. Asn-109 carries an N-linked (GlcNAc...) asparagine glycan. Residues 118-120 (HTN), 128-130 (NRE), 194-195 (DW), and Gly-199 contribute to the xyloglucan site. 2 disulfides stabilise this stretch: Cys-223–Cys-232 and Cys-272–Cys-286. Residue Arg-277 participates in xyloglucan binding.

Belongs to the glycosyl hydrolase 16 family. XTH group 2 subfamily. Post-translationally, contains at least one intrachain disulfide bond essential for its enzymatic activity.

It localises to the secreted. It is found in the cell wall. The protein localises to the extracellular space. Its subcellular location is the apoplast. The enzyme catalyses breaks a beta-(1-&gt;4) bond in the backbone of a xyloglucan and transfers the xyloglucanyl segment on to O-4 of the non-reducing terminal glucose residue of an acceptor, which can be a xyloglucan or an oligosaccharide of xyloglucan.. Functionally, catalyzes xyloglucan endohydrolysis (XEH) and/or endotransglycosylation (XET). Cleaves and religates xyloglucan polymers, an essential constituent of the primary cell wall, and thereby participates in cell wall construction of growing tissues. This Arabidopsis thaliana (Mouse-ear cress) protein is Probable xyloglucan endotransglucosylase/hydrolase protein 16 (XTH16).